We begin with the raw amino-acid sequence, 620 residues long: 1-deoxy-D-xylulose-5-phosphate synthase (620 aa).

Thiamine diphosphate is bound by residues H80 and 121–123; that span reads GHS. D152 contributes to the Mg(2+) binding site. Thiamine diphosphate is bound by residues 153 to 154, N181, Y288, and E370; that span reads GA. N181 is a binding site for Mg(2+).

The protein belongs to the transketolase family. DXPS subfamily. As to quaternary structure, homodimer. The cofactor is Mg(2+). It depends on thiamine diphosphate as a cofactor.

The enzyme catalyses D-glyceraldehyde 3-phosphate + pyruvate + H(+) = 1-deoxy-D-xylulose 5-phosphate + CO2. It functions in the pathway metabolic intermediate biosynthesis; 1-deoxy-D-xylulose 5-phosphate biosynthesis; 1-deoxy-D-xylulose 5-phosphate from D-glyceraldehyde 3-phosphate and pyruvate: step 1/1. Functionally, catalyzes the acyloin condensation reaction between C atoms 2 and 3 of pyruvate and glyceraldehyde 3-phosphate to yield 1-deoxy-D-xylulose-5-phosphate (DXP). The polypeptide is 1-deoxy-D-xylulose-5-phosphate synthase (Escherichia coli O157:H7).